The sequence spans 304 residues: D-alanine--D-alanine ligase (304 aa).

The region spanning lysine 103–lysine 299 is the ATP-grasp domain. ATP is bound at residue glutamate 129–serine 184. 3 residues coordinate Mg(2+): aspartate 253, glutamate 266, and asparagine 268.

The protein belongs to the D-alanine--D-alanine ligase family. The cofactor is Mg(2+). Mn(2+) is required as a cofactor.

It is found in the cytoplasm. It carries out the reaction 2 D-alanine + ATP = D-alanyl-D-alanine + ADP + phosphate + H(+). The protein operates within cell wall biogenesis; peptidoglycan biosynthesis. Cell wall formation. This chain is D-alanine--D-alanine ligase, found in Neisseria gonorrhoeae (strain ATCC 700825 / FA 1090).